We begin with the raw amino-acid sequence, 356 residues long: Dihydroorotate dehydrogenase (quinone) (356 aa).

FMN contacts are provided by residues 60-64 (AGFDK) and Ser84. Lys64 provides a ligand contact to substrate. 109–113 (NRFGF) contributes to the substrate binding site. 2 residues coordinate FMN: Asn140 and Asn171. Asn171 contacts substrate. The Nucleophile role is filled by Ser174. Asn176 lines the substrate pocket. Lys216 and Gly244 together coordinate FMN. 245 to 246 (NT) contacts substrate. Residues Gly267, Gly296, and 317–318 (YS) contribute to the FMN site.

Belongs to the dihydroorotate dehydrogenase family. Type 2 subfamily. As to quaternary structure, monomer. The cofactor is FMN.

Its subcellular location is the cell membrane. The catalysed reaction is (S)-dihydroorotate + a quinone = orotate + a quinol. It functions in the pathway pyrimidine metabolism; UMP biosynthesis via de novo pathway; orotate from (S)-dihydroorotate (quinone route): step 1/1. Functionally, catalyzes the conversion of dihydroorotate to orotate with quinone as electron acceptor. This Azorhizobium caulinodans (strain ATCC 43989 / DSM 5975 / JCM 20966 / LMG 6465 / NBRC 14845 / NCIMB 13405 / ORS 571) protein is Dihydroorotate dehydrogenase (quinone).